The primary structure comprises 277 residues: Probable CCR4-associated factor 1 homolog 10 (277 aa).

Asp40, Glu42, Asp166, and Asp235 together coordinate a divalent metal cation.

The protein belongs to the CAF1 family. In terms of assembly, component of the CCR4-NOT complex, at least composed of CRR4 and CAF1 proteins. It depends on a divalent metal cation as a cofactor.

It localises to the nucleus. It is found in the cytoplasm. The catalysed reaction is Exonucleolytic cleavage of poly(A) to 5'-AMP.. Ubiquitous transcription factor required for a diverse set of processes. It is a component of the CCR4 complex involved in the control of gene expression. The polypeptide is Probable CCR4-associated factor 1 homolog 10 (CAF1-10) (Arabidopsis thaliana (Mouse-ear cress)).